A 294-amino-acid polypeptide reads, in one-letter code: Picrinine-N-methytransferase TMT2 (294 aa).

Residues 75 to 84 form an SAM motif I region; the sequence is LLDVGCGLGG. The Vacuolar targeting signal signature appears at 137 to 143; it reads DGEFDVV. The interval 138-146 is SAM motif II; it reads GEFDVVFTL. Positions 165 to 174 are SAM motif III; it reads VGSPGAAIVV.

This sequence belongs to the class I-like SAM-binding methyltransferase superfamily. gTMT family. Homodimer.

The protein resides in the vacuole membrane. It catalyses the reaction picrinine + S-adenosyl-L-methionine = ervincine + S-adenosyl-L-homocysteine + H(+). It functions in the pathway alkaloid biosynthesis; vindoline biosynthesis. Its function is as follows. S-adenosyl-L-methionine-dependent N-methyltransferase involved in the biosynthesis of biologically active monoterpenoid indole alkaloids (MIAs) natural products including vindoline. Catalyzes the conversion of picrinine to N-methylpicrinine (ervincine). The polypeptide is Picrinine-N-methytransferase TMT2 (Catharanthus roseus (Madagascar periwinkle)).